Here is a 515-residue protein sequence, read N- to C-terminus: NAD(P)H-quinone oxidoreductase subunit 2 (515 aa).

14 helical membrane-spanning segments follow: residues 14 to 34, 42 to 62, 79 to 99, 109 to 128, 132 to 151, 167 to 187, 206 to 226, 240 to 260, 274 to 294, 302 to 322, 330 to 350, 374 to 394, 396 to 416, and 462 to 482; these read TILP…ADLI, WTPY…IPLW, LSLF…LMSI, LGEF…FIAG, LVFI…LLTG, LLIG…LYGL, LGLV…ISAV, PTPV…ALAI, WQLI…VVAL, MLAY…VVGT, LFYL…VILF, LGLS…GFFG, IYLF…LGLL, and VGLV…NPLF.

This sequence belongs to the complex I subunit 2 family. NDH-1 can be composed of about 15 different subunits; different subcomplexes with different compositions have been identified which probably have different functions.

The protein localises to the cellular thylakoid membrane. The enzyme catalyses a plastoquinone + NADH + (n+1) H(+)(in) = a plastoquinol + NAD(+) + n H(+)(out). It carries out the reaction a plastoquinone + NADPH + (n+1) H(+)(in) = a plastoquinol + NADP(+) + n H(+)(out). In terms of biological role, NDH-1 shuttles electrons from an unknown electron donor, via FMN and iron-sulfur (Fe-S) centers, to quinones in the respiratory and/or the photosynthetic chain. The immediate electron acceptor for the enzyme in this species is believed to be plastoquinone. Couples the redox reaction to proton translocation, and thus conserves the redox energy in a proton gradient. Cyanobacterial NDH-1 also plays a role in inorganic carbon-concentration. The chain is NAD(P)H-quinone oxidoreductase subunit 2 from Thermosynechococcus vestitus (strain NIES-2133 / IAM M-273 / BP-1).